The sequence spans 308 residues: Serine/threonine-protein phosphatase 4 catalytic subunit (308 aa).

Residues D51, H53, D79, and N111 each coordinate Mn(2+). H112 serves as the catalytic Proton donor. Residues H161 and H235 each contribute to the Mn(2+) site. L308 is subject to Leucine methyl ester.

This sequence belongs to the PPP phosphatase family. PP-4 (PP-X) subfamily. As to quaternary structure, catalytic subunit of the histone H2A phosphatase complex (HTP-C) containing PPH3, PSY2 and PSY4. Requires Mn(2+) as cofactor.

It localises to the cytoplasm. The protein resides in the nucleus. The enzyme catalyses O-phospho-L-seryl-[protein] + H2O = L-seryl-[protein] + phosphate. It catalyses the reaction O-phospho-L-threonyl-[protein] + H2O = L-threonyl-[protein] + phosphate. Functionally, forms the histone H2A phosphatase complex in association with the regulatory subunits PSY2 and PSY4, which dephosphorylates H2AS128ph (gamma-H2A) that has been displaced from sites of DNA lesions in the double-stranded DNA break repair process. Dephosphorylation is necessary for efficient recovery from the DNA damage checkpoint. The chain is Serine/threonine-protein phosphatase 4 catalytic subunit (PPH3) from Kluyveromyces lactis (strain ATCC 8585 / CBS 2359 / DSM 70799 / NBRC 1267 / NRRL Y-1140 / WM37) (Yeast).